A 320-amino-acid polypeptide reads, in one-letter code: Cytochrome f (320 aa).

The N-terminal stretch at 1–35 (MKLNSLINLIQKSIYSCTLLLIILNIICVAPNSSN) is a signal peptide. Residues Phe-37, Cys-57, Cys-60, and His-61 each contribute to the heme site. Residues 286–306 (IKGMIVFFFASVLAQIFFVLK) traverse the membrane as a helical segment.

This sequence belongs to the cytochrome f family. In terms of assembly, the 4 large subunits of the cytochrome b6-f complex are cytochrome b6, subunit IV (17 kDa polypeptide, petD), cytochrome f and the Rieske protein, while the 4 small subunits are PetG, PetL, PetM and PetN. The complex functions as a dimer. Requires heme as cofactor.

The protein localises to the plastid. The protein resides in the chloroplast thylakoid membrane. In terms of biological role, component of the cytochrome b6-f complex, which mediates electron transfer between photosystem II (PSII) and photosystem I (PSI), cyclic electron flow around PSI, and state transitions. The sequence is that of Cytochrome f from Pyropia yezoensis (Susabi-nori).